Consider the following 306-residue polypeptide: Type 2A encapsulin shell protein SrpI (306 aa).

It belongs to the encapsulin family. Family 2A subfamily. The 24.5 nm encapsulin nanocompartment is formed by 60 subunits; monomers form pentamers which assemble to form shells. There are 12 positively charged pores where the pentamers meet with a minimal pore diameter of 3.7 Angstroms as well 3-fold axis channels and dimer channels.

The protein resides in the encapsulin nanocompartment. In terms of biological role, shell component of a type 2A encapsulin nanocompartment. Expression in E.coli generates nanocompartments with an average diameter of 25 nm. They can be disassembled by treatment with 6M guanidine hydrochloride and reassembled with cargo. The nanocompartment is probably involved in sulfur metabolism. Probably allows passage of cysteine into its interior; during growth in light the physiological pH is 8-8.4, about 30-54% of free cysteine (charge -1) would be able to pass through the shell. The sequence is that of Type 2A encapsulin shell protein SrpI from Synechococcus elongatus (strain ATCC 33912 / PCC 7942 / FACHB-805) (Anacystis nidulans R2).